Reading from the N-terminus, the 314-residue chain is tRNA dimethylallyltransferase (314 aa).

13 to 20 (GPTASGKS) is a binding site for ATP. Substrate is bound at residue 15 to 20 (TASGKS). Interaction with substrate tRNA stretches follow at residues 38–41 (DSMQ) and 161–165 (QRIAR).

The protein belongs to the IPP transferase family. As to quaternary structure, monomer. Mg(2+) is required as a cofactor.

The enzyme catalyses adenosine(37) in tRNA + dimethylallyl diphosphate = N(6)-dimethylallyladenosine(37) in tRNA + diphosphate. In terms of biological role, catalyzes the transfer of a dimethylallyl group onto the adenine at position 37 in tRNAs that read codons beginning with uridine, leading to the formation of N6-(dimethylallyl)adenosine (i(6)A). The chain is tRNA dimethylallyltransferase from Parvibaculum lavamentivorans (strain DS-1 / DSM 13023 / NCIMB 13966).